Here is a 464-residue protein sequence, read N- to C-terminus: Hydrogen cyanide synthase subunit HcnB (464 aa).

As to quaternary structure, heterotrimer of HcnA, HcnB and HcnC.

The protein resides in the cell membrane. It carries out the reaction glycine + 2 A = hydrogen cyanide + 2 AH2 + CO2. Its activity is regulated as follows. Oxygen is necessary for cyanogenesis. Activated by succinate, glycine methyl ester, glucose and D,L-methionine in addition to glycine. Phenazine methosulfate, methylene blue, 2,6-dichlorophenolindophenol (DCIP) and ferricyanide can replace oxygen for the reaction. Inhibited by pyrrolnitrin and acriflavine at 1 mM concentration. Functionally, a three-component membrane-bound flavoenzyme that catalyzes the formation of hydrogen cyanide, a secondary metabolite, by transfer of electrons to a cyanide-resistant branch of the aerobic respiratory chain. In Pseudomonas aeruginosa (strain ATCC 15692 / DSM 22644 / CIP 104116 / JCM 14847 / LMG 12228 / 1C / PRS 101 / PAO1), this protein is Hydrogen cyanide synthase subunit HcnB.